Here is a 59-residue protein sequence, read N- to C-terminus: MNIQRAKELSVSAEQANVSFQGMPVMIQHVDESNETARIYEVKNPERELTVPVNSLEEI.

It belongs to the SspH family.

The protein localises to the spore core. This is Small, acid-soluble spore protein H 2 (sspH2) from Bacillus cereus (strain ATCC 14579 / DSM 31 / CCUG 7414 / JCM 2152 / NBRC 15305 / NCIMB 9373 / NCTC 2599 / NRRL B-3711).